The primary structure comprises 405 residues: Na(+)-translocating NADH-quinone reductase subunit F (405 aa).

Residues 3-23 (IILGIVMFTVIVLVLALMILF) form a helical membrane-spanning segment. One can recognise a 2Fe-2S ferredoxin-type domain in the interval 32-124 (GDITIKVNGE…DMDIEVPEEV (93 aa)). The [2Fe-2S] cluster site is built by C67, C73, C76, and C108. The region spanning 127–267 (VKKWECTVIS…SGPFGEFFAK (141 aa)) is the FAD-binding FR-type domain.

This sequence belongs to the NqrF family. Composed of six subunits; NqrA, NqrB, NqrC, NqrD, NqrE and NqrF. Requires [2Fe-2S] cluster as cofactor. FAD is required as a cofactor.

The protein resides in the cell inner membrane. It carries out the reaction a ubiquinone + n Na(+)(in) + NADH + H(+) = a ubiquinol + n Na(+)(out) + NAD(+). In terms of biological role, NQR complex catalyzes the reduction of ubiquinone-1 to ubiquinol by two successive reactions, coupled with the transport of Na(+) ions from the cytoplasm to the periplasm. The first step is catalyzed by NqrF, which accepts electrons from NADH and reduces ubiquinone-1 to ubisemiquinone by a one-electron transfer pathway. This chain is Na(+)-translocating NADH-quinone reductase subunit F, found in Neisseria meningitidis serogroup C / serotype 2a (strain ATCC 700532 / DSM 15464 / FAM18).